Reading from the N-terminus, the 433-residue chain is MRKITSILLTCVMGCTATYAADWDGVPVPANPGSGKTWELHPLSDDFNYEAPAAGKSTRFYERWKEGFINPWTGPGLTEWHPHYSYVSGGKLAITSGRKPGTNQVYLGSITSKAPLTYPVYMEARAKLSNMVLASDFWFLSADSTEEIDVIEAYGSDRPGQEWYAERLHLSHHVFIRDPFQDYQPTDAGSWYADGKGTKWRDAFHRVGVYWRDPWHLEYYVDGKLVRTVSGQDIIDPNGFTGGTGLSKPMYAIINMEDQNWRSDNGITPTDAELADPNRNTYYVDWVRFYKPVPINGNATTVELGNFHNTGKDGANVTGDTVLGFNKNGNNINYNTKGDWADYTVNLPAAGEYRVDLVIASPMSSGLGAELTFAGNAAKTVTLSNTGGWESYQTFTLPQTISVSSPGNYNFRLKSTGSSNWQWNGDEIRFVKL.

The signal sequence occupies residues 1–20; the sequence is MRKITSILLTCVMGCTATYA. Residues 21-295 enclose the GH16 domain; sequence ADWDGVPVPA…WVRFYKPVPI (275 aa). Residue Glu-147 is the Nucleophile of the active site. The Proton donor role is filled by Glu-152. The CBM6 domain occupies 300–431; that stretch reads TTVELGNFHN…QWNGDEIRFV (132 aa).

The protein belongs to the glycosyl hydrolase 16 family. As to quaternary structure, monomer.

It is found in the periplasm. It carries out the reaction Hydrolysis of (1-&gt;4)-beta-D-galactosidic linkages in agarose, giving the tetramer as the predominant product.. Activity is abolished by Hg(2+), Cu(2+), Pb(2+) and Zn(2+) ions, but is not affected by NaCl up to at least 1.0 M, Mg(2+), K(+) and Ca(2+). Not affected by iodoacetamide, p-chloromercuribenzoate, dithiothreitol, 2-mercaptoethanol, EDTA and sodium dodecyl sulfate. Inhibited by N-bromosuccinimide. Functionally, endo-type beta-agarase, which produces neoagarotetraose (NA4) as the main final product, with a small amount of neoagarohexaose (NA6) and neoagarobiose (NA2). The sequence is that of Beta-agarase AgaA from Microbulbifer thermotolerans.